Reading from the N-terminus, the 418-residue chain is Ciliary microtubule-associated protein 2 (418 aa).

In terms of tissue distribution, sperm.

In Homo sapiens (Human), this protein is Ciliary microtubule-associated protein 2.